The sequence spans 473 residues: Aspartyl/glutamyl-tRNA(Asn/Gln) amidotransferase subunit B (473 aa).

This sequence belongs to the GatB/GatE family. GatB subfamily. As to quaternary structure, heterotrimer of A, B and C subunits.

It carries out the reaction L-glutamyl-tRNA(Gln) + L-glutamine + ATP + H2O = L-glutaminyl-tRNA(Gln) + L-glutamate + ADP + phosphate + H(+). The catalysed reaction is L-aspartyl-tRNA(Asn) + L-glutamine + ATP + H2O = L-asparaginyl-tRNA(Asn) + L-glutamate + ADP + phosphate + 2 H(+). Functionally, allows the formation of correctly charged Asn-tRNA(Asn) or Gln-tRNA(Gln) through the transamidation of misacylated Asp-tRNA(Asn) or Glu-tRNA(Gln) in organisms which lack either or both of asparaginyl-tRNA or glutaminyl-tRNA synthetases. The reaction takes place in the presence of glutamine and ATP through an activated phospho-Asp-tRNA(Asn) or phospho-Glu-tRNA(Gln). This chain is Aspartyl/glutamyl-tRNA(Asn/Gln) amidotransferase subunit B, found in Francisella tularensis subsp. novicida (strain U112).